Reading from the N-terminus, the 819-residue chain is Leucine--tRNA ligase (819 aa).

The 'HIGH' region motif lies at 40–51; sequence PYPSGAGLHVGH. The 'KMSKS' region motif lies at 600–604; sequence KMSKS. Lysine 603 serves as a coordination point for ATP.

This sequence belongs to the class-I aminoacyl-tRNA synthetase family.

The protein resides in the cytoplasm. It catalyses the reaction tRNA(Leu) + L-leucine + ATP = L-leucyl-tRNA(Leu) + AMP + diphosphate. The chain is Leucine--tRNA ligase from Chlamydia trachomatis serovar L2 (strain ATCC VR-902B / DSM 19102 / 434/Bu).